Consider the following 689-residue polypeptide: ATP-dependent zinc metalloprotease FtsH 2 (689 aa).

Residues 1 to 3 (MRK) are Cytoplasmic-facing. The helical transmembrane segment at 4–24 (FFRGASFYILAFIIILFIVQN) threads the bilayer. Residues 25-111 (FGRPTQEIDE…SAAPPPTTPW (87 aa)) are Extracellular-facing. The helical transmembrane segment at 112-132 (FIELLPSIFMVLIFIVFWFVF) threads the bilayer. Residues 133-689 (MQQSQGGGNR…QDNEENRKEE (557 aa)) are Cytoplasmic-facing. Residue 205 to 212 (GPPGTGKT) coordinates ATP. H427 is a Zn(2+) binding site. Residue E428 is part of the active site. Zn(2+)-binding residues include H431 and D503. The span at 661–673 (EELIEVSSDKEEE) shows a compositional bias: basic and acidic residues. The interval 661-689 (EELIEVSSDKEEEKDNQDDQDNEENRKEE) is disordered.

It in the central section; belongs to the AAA ATPase family. The protein in the C-terminal section; belongs to the peptidase M41 family. As to quaternary structure, homohexamer. Zn(2+) serves as cofactor.

The protein localises to the cell membrane. Its function is as follows. Acts as a processive, ATP-dependent zinc metallopeptidase for both cytoplasmic and membrane proteins. Plays a role in the quality control of integral membrane proteins. In Alkaliphilus metalliredigens (strain QYMF), this protein is ATP-dependent zinc metalloprotease FtsH 2.